Reading from the N-terminus, the 71-residue chain is Defensin-like protein 124 (71 aa).

A signal peptide spans 1–25 (MSKPTVIVIFMAILVLGMATKETQG). 4 disulfides stabilise this stretch: C28–C71, C40–C60, C45–C65, and C49–C67.

This sequence belongs to the DEFL family.

The protein resides in the secreted. This chain is Defensin-like protein 124 (LCR16), found in Arabidopsis thaliana (Mouse-ear cress).